The primary structure comprises 227 residues: Germin-like protein 3-5 (227 aa).

Residues 1–29 (MEYGFKAAGLVFVVLLLQQAPVLIRATDA) form the signal peptide. Cys36 and Cys51 are joined by a disulfide. One can recognise a Cupin type-1 domain in the interval 65–217 (SKIATGGDVN…ALRVDAGVVE (153 aa)). N-linked (GlcNAc...) asparagine glycans are attached at residues Asn78 and Asn81. Residues His114, His116, Glu121, and His163 each coordinate Mn(2+).

Belongs to the germin family. Oligomer (believed to be a pentamer but probably hexamer).

The protein localises to the secreted. It is found in the extracellular space. Its subcellular location is the apoplast. In terms of biological role, may play a role in plant defense. Probably has no oxalate oxidase activity even if the active site is conserved. The chain is Germin-like protein 3-5 from Oryza sativa subsp. japonica (Rice).